A 23-amino-acid polypeptide reads, in one-letter code: GLGSVLGKILKMGANLLGGAPKQ.

Expressed by the skin glands.

It is found in the secreted. Functionally, antimicrobial peptide. This Xenopus ruwenzoriensis (Uganda clawed frog) protein is Caerulein precursor fragment R6.